The following is a 765-amino-acid chain: Transient receptor potential cation channel subfamily V member 6 (765 aa).

At 1–367 the chain is on the cytoplasmic side; the sequence is MGPLQGDGGP…SLKWKRYGRP (367 aa). 3 ANK repeats span residues 84–114, 118–147, and 156–185; these read IWES…KVHQ, MGET…ELVF, and EGQT…SVSA. An interaction with calmodulin region spans residues 133–143; sequence EAAMVLMEAAP. Tyrosine 201 carries the phosphotyrosine; by SRC modification. ANK repeat units follow at residues 202–231, 235–277, and 279–308; these read FGEH…DIRA, LGNT…LVPN, and QGLT…HTQW. The helical transmembrane segment at 368–388 threads the bilayer; that stretch reads YFCMLGAIYLLYIICFTMCCI. At 389–425 the chain is on the extracellular side; it reads YRPLKPRTNNRTSPRDNTLLQQKLLQEAYMTPKDDIR. N-linked (GlcNAc...) asparagine glycosylation occurs at asparagine 398. A helical membrane pass occupies residues 426 to 448; sequence LVGELVTVIGAIIILLVEVPDIF. The Cytoplasmic segment spans residues 449 to 463; the sequence is RMGVTRFFGQTILGG. The helical transmembrane segment at 464–483 threads the bilayer; the sequence is PFHVLIITYAFMVLVTMVMR. The Extracellular portion of the chain corresponds to 484 to 489; the sequence is LISASG. Residues 490 to 509 form a helical membrane-spanning segment; that stretch reads EVVPMSFALVLGWCNVMYFA. At 510 to 529 the chain is on the cytoplasmic side; that stretch reads RGFQMLGPFTIMIQKMIFGD. The helical transmembrane segment at 530–552 threads the bilayer; sequence LMRFCWLMAVVILGFASAFYIIF. The Extracellular segment spans residues 553 to 565; it reads QTEDPEELGHFYD. Positions 566-585 form an intramembrane region, pore-forming; that stretch reads YPMALFSTFELFLTIIDGPA. Positions 581-585 match the Selectivity filter motif; that stretch reads IDGPA. Aspartate 582 contributes to the Ca(2+) binding site. Residues 586-596 are Extracellular-facing; the sequence is NYNVDLPFMYS. A helical transmembrane segment spans residues 597 to 617; the sequence is ITYAAFAIIATLLMLNLLIAM. At 618 to 765 the chain is on the cytoplasmic side; sequence MGDTHWRVAH…EDGESWEYQI (148 aa). Positions 638–642 are interaction with S100A10; the sequence is VATTV. The segment at 731-751 is interaction with calmodulin; the sequence is SSANWERLRQGTLRRDLRGII. Threonine 742 bears the Phosphothreonine; by PKC/PRKCA mark.

This sequence belongs to the transient receptor (TC 1.A.4) family. TrpV subfamily. TRPV6 sub-subfamily. In terms of assembly, homotetramer. Probably also forms heterotetramers with TRPV5. Interacts with TRPV5. Interacts with S100A10 and probably with the ANAX2-S100A10 heterotetramer. The interaction with S100A10 is required for the trafficking to the plasma membrane. Interacts with BSPRY. Interacts with TCAF1 and TCAF2 isoform 2. Interacts with calmodulin. Glycosylated. In terms of processing, phosphorylation at Tyr-201 by SRC leads to an increased calcium influx through the channel. Probably dephosphorylated at this site by PTPN1. Phosphorylation by PRKCA at the calmodulin binding site delays channel inactivation. As to expression, expressed at high levels in the gastrointestinal tract, including esophagus, stomach, duodenum, jejunum, ileum and colon, and in pancreas, placenta, prostate and salivary gland. Expressed at moderate levels in liver, kidney and testis. Expressed in trophoblasts of placenta villus trees (at protein level). Expressed in locally advanced prostate cancer, metastatic and androgen-insensitive prostatic lesions but not detected in healthy prostate tissue and benign prostatic hyperplasia.

The protein localises to the cell membrane. It carries out the reaction Ca(2+)(in) = Ca(2+)(out). Calcium selective cation channel that mediates Ca(2+) uptake in various tissues, including the intestine. Important for normal Ca(2+) ion homeostasis in the body, including bone and skin. The channel is activated by low internal calcium level, probably including intracellular calcium store depletion, and the current exhibits an inward rectification. Inactivation includes both a rapid Ca(2+)-dependent and a slower Ca(2+)-calmodulin-dependent mechanism; the latter may be regulated by phosphorylation. In vitro, is slowly inhibited by Mg(2+) in a voltage-independent manner. Heteromeric assembly with TRPV5 seems to modify channel properties. TRPV5-TRPV6 heteromultimeric concatemers exhibit voltage-dependent gating. The polypeptide is Transient receptor potential cation channel subfamily V member 6 (TRPV6) (Homo sapiens (Human)).